A 709-amino-acid chain; its full sequence is Polyribonucleotide nucleotidyltransferase (709 aa).

Mg(2+) is bound by residues Asp485 and Asp491. The KH domain occupies 552–611 (PRIYTMKIDPKKIKDVIGKGGATIRSLTEETGTSIDIDDDGTVKIAAVDSNAAKNVMGRI). The region spanning 621–689 (GAIYKGKVTR…RQGRIRLTMK (69 aa)) is the S1 motif domain.

Belongs to the polyribonucleotide nucleotidyltransferase family. Component of the RNA degradosome, which is a multiprotein complex involved in RNA processing and mRNA degradation. Mg(2+) serves as cofactor.

The protein localises to the cytoplasm. It catalyses the reaction RNA(n+1) + phosphate = RNA(n) + a ribonucleoside 5'-diphosphate. Its function is as follows. Involved in mRNA degradation. Catalyzes the phosphorolysis of single-stranded polyribonucleotides processively in the 3'- to 5'-direction. This chain is Polyribonucleotide nucleotidyltransferase, found in Haemophilus influenzae (strain PittEE).